A 5084-amino-acid chain; its full sequence is Apicidin F synthase (5084 aa).

Residues alanine 209–leucine 606 are adenylation 1. Residues histidine 731–valine 808 form the Carrier 1 domain. Position 768 is an O-(pantetheine 4'-phosphoryl)serine (serine 768). Condensation stretches follow at residues tyrosine 822 to tyrosine 1124 and glutamate 1309 to valine 1609. The adenylation 2 stretch occupies residues glutamate 1788–isoleucine 2192. Residues valine 2341 to serine 2415 form the Carrier 2 domain. Serine 2376 is modified (O-(pantetheine 4'-phosphoryl)serine). The disordered stretch occupies residues serine 2415–asparagine 2441. The segment covering serine 2421–threonine 2437 has biased composition (low complexity). The condensation 3 stretch occupies residues glutamate 2478–isoleucine 2755. Residues arginine 2935 to arginine 3328 form an adenylation 3 region. Residues glutamate 3463 to glutamate 3539 enclose the Carrier 3 domain. At serine 3500 the chain carries O-(pantetheine 4'-phosphoryl)serine. A condensation 4 region spans residues glutamate 3581–isoleucine 3866. Residues arginine 4029–histidine 4426 are adenylation 4. One can recognise a Carrier 4 domain in the interval alanine 4554–arginine 4631. At serine 4592 the chain carries O-(pantetheine 4'-phosphoryl)serine. A condensation 5 region spans residues glutamate 4669–leucine 4948.

Belongs to the NRP synthetase family.

It functions in the pathway secondary metabolite biosynthesis. Its function is as follows. Non-ribosomal peptide synthetase; part of the gene cluster that mediates the biosynthesis of the cyclic tetrapeptide apicidin F (APF). The non-ribosomal peptide synthetase apf1 incorporates four different amino acids to produce apicidin F: L-phenylalanine, D-pipecolic acid (D-pip), N-methoxy-L-tryptophan and L-2-aminooctanedioic acid. L-Phenylalanine is the only proteinogenic amino acid directly used by apf1. The 3 other apf1 substrates are non-proteinogenic and have to be modified by other enzymes of the cluster. Lysine is converted to delta-1-pyrroline-5-carboxylate (P5C) which is reduced to L-pipecolic acid (L-pip) by apf3. L-pip is epimerized to D-pip, probably by apf1 activity, prior to incorporation. L-Tryptophan is N-oxidyzed by one of the cytochrome P450 monooxygenases (apf7 or apf8), and further methylated at the hydroxy group by the O-methyltransferase apf6 to yield N-methoxy-L-tryptophan. The synthesis of the fourth apf1 substrate is more complex. The fatty acid synthase apf5 is involved in the synthesis of the octanoic acid backbone of L-2-aminooctanedioic acid by fixing one acetyl-CoA unit and three malonyl-CoA units. Then one of the cytochrome P450 monooxygenases (apf7 or apf8) may oxidize this backbone to 2-oxooctanoic acid. The aminotransferase apf4 is predicted to catalyze the exchange of the keto group with an amino group. The next step would be the oxidation of 2-aminooctanoic acid by one of the cytochrome P450 monooxygenases (apf7 or apf8). The last step is the oxidation of 2-amino-8-hydroxyoctanoic acid to 2-aminooctanedioic acid is catalyzed by the FAD-dependent monooxygenase apf9. This Gibberella fujikuroi (strain CBS 195.34 / IMI 58289 / NRRL A-6831) (Bakanae and foot rot disease fungus) protein is Apicidin F synthase.